Reading from the N-terminus, the 649-residue chain is Leucine-rich repeat transmembrane protein FLRT3 (649 aa).

The N-terminal stretch at 1-28 (MISPAWSLFLIGTKIGLFFQVAPLSVMA) is a signal peptide. The 30-residue stretch at 29–58 (KSCPSVCRCDAGFIYCNDRSLTSIPVGIPE) folds into the LRRNT domain. Topologically, residues 29-528 (KSCPSVCRCD…KEPYKNPNLP (500 aa)) are extracellular. Cystine bridges form between Cys-31-Cys-37 and Cys-35-Cys-44. Positions 38–67 (DAGFIYCNDRSLTSIPVGIPEDATTLYLQN) are interaction with ADGRL3. LRR repeat units lie at residues 59–80 (DATTLYLQNNQINNVGIPSDLK), 84–104 (KVQRIYLYHNSLDEFPTNLPK), 105–126 (YVKELHLQENNIRTITYDSLSK), 129–150 (YLEELHLDDNSVSAVSIEEGAF), 155–176 (YLRLLFLSRNHLSTIPGGLPRT), 177–197 (IEELRLDDNRISTISSPSLHG), 200–220 (SLKRLVLDGNLLNNHGLGDKV), 226–247 (NLTELSLVRNSLTAAPVNLPGT), 248–269 (SLRKLYLQDNHINRVPPNAFSY), and 272–293 (QLYRLDMSNNNLSNLPQGIFDD). Asn-226 carries N-linked (GlcNAc...) asparagine glycosylation. N-linked (GlcNAc...) asparagine glycosylation is found at Asn-282 and Asn-296. One can recognise an LRRCT domain in the interval 305–357 (NPWYCGCKMKWVRDWLQSLPVKVNVRGLMCQAPEKVRGMAIKDLSAELFDCKD). Cys-309 and Cys-334 are oxidised to a cystine. Residues 378–405 (QGQWPAPVTKQPDIKNPKLTKDQRTTGS) form a disordered region. Residues 389–401 (PDIKNPKLTKDQR) show a composition bias toward basic and acidic residues. One can recognise a Fibronectin type-III domain in the interval 405-504 (SPSRKTILIT…VCIETQTAPL (100 aa)). A helical membrane pass occupies residues 529–549 (LAAIIGGAVALVSIALLALVC). The Cytoplasmic portion of the chain corresponds to 550–649 (WYVHRNGSLF…GIPDLDHSHS (100 aa)). A disordered region spans residues 629–649 (ESSSNRSYRDSGIPDLDHSHS).

As to quaternary structure, monomer and homodimer. Self-associates (via leucine-rich repeats), giving rise to homooligomers. Interacts with FGFR1. Interacts (via extracellular domain) with ADGRL1/LPHN1 and ADGRL3 (via olfactomedin-like domain). Interacts (via extracellular domain) with LPHN2 (via olfactomedin-like domain). Interacts (via extracellular domain) with UNC5B (via Ig domain). May also interact (via extracellular domain) with UNC5A and UNC5C. Interacts (via extracellular domain) with UNC5D (via extracellular domain). Identified in complexes composed of FLRT3, ADGRL3 and UNC5B, respectively FLRT3, ADGRL3 and UNC5D. Interacts (via cytoplasmic domain) with ROBO1. Post-translationally, N-glycosylated. Proteolytic cleavage in the juxtamembrane region gives rise to a soluble ectodomain. Cleavage is probably effected by a metalloprotease. As to expression, detected in brain (at protein level). Detected in brain neurons, especially in basal ganglia, hippocampus dentate gyrus and CA3 region, cerebellum and in olfactory bulb.

It localises to the cell membrane. The protein localises to the presynaptic cell membrane. Its subcellular location is the synapse. The protein resides in the synaptosome. It is found in the postsynaptic density. It localises to the cell projection. The protein localises to the dendrite. Its subcellular location is the axon. The protein resides in the growth cone membrane. It is found in the cytoplasmic vesicle. It localises to the endoplasmic reticulum membrane. The protein localises to the cell junction. Its subcellular location is the focal adhesion. The protein resides in the secreted. Functions in cell-cell adhesion, cell migration and axon guidance, exerting an attractive or repulsive role depending on its interaction partners. Plays a role in the spatial organization of brain neurons. Plays a role in vascular development in the retina. Plays a role in cell-cell adhesion via its interaction with ADGRL3 and probably also other latrophilins that are expressed at the surface of adjacent cells. Interaction with the intracellular domain of ROBO1 mediates axon attraction towards cells expressing NTN1. Mediates axon growth cone collapse and plays a repulsive role in neuron guidance via its interaction with UNC5B, and possibly also other UNC-5 family members. Promotes neurite outgrowth (in vitro). Mediates cell-cell contacts that promote an increase both in neurite number and in neurite length. Plays a role in the regulation of the density of glutamaergic synapses. Plays a role in fibroblast growth factor-mediated signaling cascades. Required for normal morphogenesis during embryonic development, but not for normal embryonic patterning. Required for normal ventral closure, headfold fusion and definitive endoderm migration during embryonic development. Required for the formation of a normal basement membrane and the maintenance of a normal anterior visceral endoderm during embryonic development. This Rattus norvegicus (Rat) protein is Leucine-rich repeat transmembrane protein FLRT3 (Flrt3).